Consider the following 100-residue polypeptide: Urease subunit gamma (100 aa).

The protein belongs to the urease gamma subunit family. In terms of assembly, heterotrimer of UreA (gamma), UreB (beta) and UreC (alpha) subunits. Three heterotrimers associate to form the active enzyme.

The protein resides in the cytoplasm. It catalyses the reaction urea + 2 H2O + H(+) = hydrogencarbonate + 2 NH4(+). It participates in nitrogen metabolism; urea degradation; CO(2) and NH(3) from urea (urease route): step 1/1. In Limosilactobacillus fermentum (Lactobacillus fermentum), this protein is Urease subunit gamma.